A 1335-amino-acid chain; its full sequence is Restriction of telomere capping protein 1 (1335 aa).

The interval 1 to 39 is disordered; that stretch reads MSLSPHVENASIPKGSTPIPKNRNVSSIGKGEFLGSSSS. 6 WD repeats span residues 207 to 248, 256 to 296, 305 to 342, 367 to 406, 439 to 486, and 489 to 527; these read NKFS…SIDN, EHTR…SKSS, TASDSIRDVKWMPGYNFASKNDQGSSTYGNLKSGYKFA, AHTGPGLCLNWHPNQEYIATGGRDGKCCLWFVGDNANAAE, NTGY…IPKH, and LSETPSLGLVWWDENLIFNIDKGTRINGWDINKEPTVLE. Disordered stretches follow at residues 559–593, 600–619, 630–651, 736–758, and 783–824; these read PELQPTSSTTCKKHPGTIKNPKNGNPENQGIIGGI, TGLTSFTPERPPTLKAGPTF, ASSFNSSSASLTSLTPQTENRE, KNATETHGDNTTTTNNNDDDDDD, and NEKV…DRSR. Residues 630–644 are compositionally biased toward low complexity; it reads ASSFNSSSASLTSLT. Residues 808 to 817 are compositionally biased toward low complexity; the sequence is SSISSISASR. One copy of the WD 7 repeat lies at 844 to 884; it reads LISIATHNASVYLSIDDLTNFKIWILIRDSLLWDLKWMTSS. Disordered regions lie at residues 935–956 and 1007–1037; these read AFRANSDEPSDAEKKPVSKLKE and DEHEHQEEEQPHDSPTKSAQFHASPIAKSIP. Composition is skewed to basic and acidic residues over residues 945-956 and 1009-1021; these read DAEKKPVSKLKE and HEHQEEEQPHDSP. A phosphoserine mark is found at Ser1030, Ser1074, Ser1081, Ser1083, Ser1117, and Ser1127. WD repeat units lie at residues 1130–1170 and 1217–1256; these read REQL…TETG and VLKYCPFEDIMGSEGDQSSIRLFCERCGELITNESSKEKL. An RING-type; degenerate zinc finger spans residues 1294–1335; the sequence is LKKLTMVILPCGHEGHFQCIQEWFLDENEQECPGGCPGVAFI.

This sequence belongs to the WD repeat RTC1 family.

It localises to the vacuole. Functionally, may be involved in a process influencing telomere capping. The sequence is that of Restriction of telomere capping protein 1 (RTC1) from Saccharomyces cerevisiae (strain YJM789) (Baker's yeast).